The primary structure comprises 233 residues: UPF0502 protein Sden_2282 (233 aa).

The span at 178–198 (TQHQRPPQTPHLSSRTNVDNS) shows a compositional bias: polar residues. Residues 178–204 (TQHQRPPQTPHLSSRTNVDNSYESDER) are disordered.

The protein belongs to the UPF0502 family.

The chain is UPF0502 protein Sden_2282 from Shewanella denitrificans (strain OS217 / ATCC BAA-1090 / DSM 15013).